Consider the following 77-residue polypeptide: Protein NS4 (77 aa).

The protein resides in the host cytoplasm. The protein localises to the host nucleus. It is found in the host nucleolus. In terms of biological role, may function as a nucleic acid binding protein that modulates transcription of genes participating in the IFN response. This chain is Protein NS4 (Segment-9), found in Antilocapra americana (Pronghorn).